The following is a 162-amino-acid chain: UPF0114 protein PSEEN0819 (162 aa).

A run of 3 helical transmembrane segments spans residues 15–35 (LLAP…LKFF), 53–73 (LVLV…LVMV), and 136–156 (LMWY…MGYL).

It belongs to the UPF0114 family.

It is found in the cell membrane. The protein is UPF0114 protein PSEEN0819 of Pseudomonas entomophila (strain L48).